The sequence spans 303 residues: Ribonuclease P protein subunit p40 (303 aa).

Component of nuclear RNase P and RNase MRP ribonucleoproteins. RNase P consists of a catalytic RNA moiety and about 10 protein subunits; POP1, POP4, POP5, POP7, RPP14, RPP21, RPP25, RPP30, RPP38 and RPP40. Within the RNase P complex, POP1, POP7 and RPP25 form the 'finger' subcomplex, POP5, RPP14, RPP40 and homodimeric RPP30 form the 'palm' subcomplex, and RPP21, POP4 and RPP38 form the 'wrist' subcomplex. All subunits of the RNase P complex interact with the catalytic RNA. Several subunits of RNase P are also part of the RNase MRP complex. RNase MRP consists of a catalytic RNA moiety and about 8 protein subunits; POP1, POP7, RPP25, RPP30, RPP38, RPP40 and possibly also POP4 and POP5.

Its subcellular location is the nucleus. The protein localises to the nucleolus. Functionally, component of ribonuclease P, a ribonucleoprotein complex that generates mature tRNA molecules by cleaving their 5'-ends. Also a component of the MRP ribonuclease complex, which cleaves pre-rRNA sequences. The protein is Ribonuclease P protein subunit p40 (RPP40) of Bos taurus (Bovine).